We begin with the raw amino-acid sequence, 271 residues long: Glutamate racemase (271 aa).

Substrate is bound by residues 10 to 11 (DS) and 42 to 43 (YG). The active-site Proton donor/acceptor is cysteine 73. 74-75 (NT) serves as a coordination point for substrate. The active-site Proton donor/acceptor is cysteine 183. Position 184–185 (184–185 (TH)) interacts with substrate.

It belongs to the aspartate/glutamate racemases family.

It carries out the reaction L-glutamate = D-glutamate. Its pathway is cell wall biogenesis; peptidoglycan biosynthesis. Provides the (R)-glutamate required for cell wall biosynthesis. This is Glutamate racemase from Lactococcus lactis subsp. lactis (strain IL1403) (Streptococcus lactis).